A 333-amino-acid chain; its full sequence is Cell shape-determining protein Mbl (333 aa).

Residues Thr-12 to Asn-14, Gly-156 to Thr-158, Glu-204 to Lys-207, and Gly-284 to Leu-287 each bind ATP.

Belongs to the FtsA/MreB family. Forms polymers.

It is found in the cytoplasm. Its function is as follows. Forms membrane-associated dynamic filaments that are essential for cell shape determination. Acts by regulating cell wall synthesis and cell elongation, and thus cell shape. A feedback loop between cell geometry and Mbl localization may maintain elongated cell shape by targeting cell wall growth to regions of negative cell wall curvature. This is Cell shape-determining protein Mbl from Bacillus cereus (strain ATCC 10987 / NRS 248).